We begin with the raw amino-acid sequence, 93 residues long: Small ribosomal subunit protein uS19 (93 aa).

Belongs to the universal ribosomal protein uS19 family.

Functionally, protein S19 forms a complex with S13 that binds strongly to the 16S ribosomal RNA. This Campylobacter concisus (strain 13826) protein is Small ribosomal subunit protein uS19.